Consider the following 276-residue polypeptide: 5'-nucleotidase SurE (276 aa).

A divalent metal cation-binding residues include D14, D15, S46, and N104.

Belongs to the SurE nucleotidase family. The cofactor is a divalent metal cation.

The protein localises to the cytoplasm. It carries out the reaction a ribonucleoside 5'-phosphate + H2O = a ribonucleoside + phosphate. Nucleotidase that shows phosphatase activity on nucleoside 5'-monophosphates. This Crocosphaera subtropica (strain ATCC 51142 / BH68) (Cyanothece sp. (strain ATCC 51142)) protein is 5'-nucleotidase SurE.